A 225-amino-acid chain; its full sequence is Enolase-phosphatase E1 (225 aa).

This sequence belongs to the HAD-like hydrolase superfamily. MasA/MtnC family. Monomer. Mg(2+) serves as cofactor.

It catalyses the reaction 5-methylsulfanyl-2,3-dioxopentyl phosphate + H2O = 1,2-dihydroxy-5-(methylsulfanyl)pent-1-en-3-one + phosphate. It functions in the pathway amino-acid biosynthesis; L-methionine biosynthesis via salvage pathway; L-methionine from S-methyl-5-thio-alpha-D-ribose 1-phosphate: step 3/6. Its pathway is amino-acid biosynthesis; L-methionine biosynthesis via salvage pathway; L-methionine from S-methyl-5-thio-alpha-D-ribose 1-phosphate: step 4/6. In terms of biological role, bifunctional enzyme that catalyzes the enolization of 2,3-diketo-5-methylthiopentyl-1-phosphate (DK-MTP-1-P) into the intermediate 2-hydroxy-3-keto-5-methylthiopentenyl-1-phosphate (HK-MTPenyl-1-P), which is then dephosphorylated to form the acireductone 1,2-dihydroxy-3-keto-5-methylthiopentene (DHK-MTPene). This Shewanella halifaxensis (strain HAW-EB4) protein is Enolase-phosphatase E1.